Reading from the N-terminus, the 317-residue chain is Melanocyte-stimulating hormone receptor (317 aa).

Residues Met1–Glu37 are Extracellular-facing. The N-linked (GlcNAc...) asparagine glycan is linked to Asn29. Residues Val38–Ile63 form a helical membrane-spanning segment. At Ala64–Pro72 the chain is on the cytoplasmic side. Residues Met73–Leu93 traverse the membrane as a helical segment. Over Glu94 to Asn118 the chain is Extracellular. The helical transmembrane segment at Val119–Val140 threads the bilayer. The Cytoplasmic portion of the chain corresponds to Asp141–Arg163. Residues Val164–Cys183 traverse the membrane as a helical segment. The Extracellular portion of the chain corresponds to Asp184 to Cys191. Residues Leu192–Leu211 traverse the membrane as a helical segment. Over Ala212–Ala240 the chain is Cytoplasmic. A helical membrane pass occupies residues Ala241–Leu266. The Extracellular portion of the chain corresponds to Cys267–Asn279. Residues Phe280–Phe300 traverse the membrane as a helical segment. At Arg301–Trp317 the chain is on the cytoplasmic side. A lipid anchor (S-palmitoyl cysteine) is attached at Cys315.

The protein belongs to the G-protein coupled receptor 1 family. Interacts with MGRN1, but does not undergo MGRN1-mediated ubiquitination; this interaction competes with GNAS-binding and thus inhibits agonist-induced cAMP production. Interacts with OPN3; the interaction results in a decrease in MC1R-mediated cAMP signaling and ultimately a decrease in melanin production in melanocytes.

It is found in the cell membrane. Its function is as follows. Receptor for MSH (alpha, beta and gamma) and ACTH. The activity of this receptor is mediated by G proteins which activate adenylate cyclase. Mediates melanogenesis, the production of eumelanin (black/brown) and phaeomelanin (red/yellow), via regulation of cAMP signaling in melanocytes. This is Melanocyte-stimulating hormone receptor (MC1R) from Trachypithecus obscurus (Dusky leaf-monkey).